We begin with the raw amino-acid sequence, 221 residues long: Urease accessory protein UreF (221 aa).

The protein belongs to the UreF family. In terms of assembly, ureD, UreF and UreG form a complex that acts as a GTP-hydrolysis-dependent molecular chaperone, activating the urease apoprotein by helping to assemble the nickel containing metallocenter of UreC. The UreE protein probably delivers the nickel.

It localises to the cytoplasm. In terms of biological role, required for maturation of urease via the functional incorporation of the urease nickel metallocenter. The protein is Urease accessory protein UreF of Vibrio parahaemolyticus.